A 470-amino-acid chain; its full sequence is Methylenetetrahydrofolate--tRNA-(uracil-5-)-methyltransferase TrmFO (470 aa).

10–15 (GAGLAG) provides a ligand contact to FAD.

Belongs to the MnmG family. TrmFO subfamily. FAD is required as a cofactor.

It localises to the cytoplasm. It catalyses the reaction uridine(54) in tRNA + (6R)-5,10-methylene-5,6,7,8-tetrahydrofolate + NADH + H(+) = 5-methyluridine(54) in tRNA + (6S)-5,6,7,8-tetrahydrofolate + NAD(+). The catalysed reaction is uridine(54) in tRNA + (6R)-5,10-methylene-5,6,7,8-tetrahydrofolate + NADPH + H(+) = 5-methyluridine(54) in tRNA + (6S)-5,6,7,8-tetrahydrofolate + NADP(+). Its function is as follows. Catalyzes the folate-dependent formation of 5-methyl-uridine at position 54 (M-5-U54) in all tRNAs. This Prochlorococcus marinus subsp. pastoris (strain CCMP1986 / NIES-2087 / MED4) protein is Methylenetetrahydrofolate--tRNA-(uracil-5-)-methyltransferase TrmFO.